The chain runs to 315 residues: Aspartate carbamoyltransferase catalytic subunit (315 aa).

The carbamoyl phosphate site is built by arginine 64 and threonine 65. Lysine 92 provides a ligand contact to L-aspartate. Carbamoyl phosphate-binding residues include arginine 114, histidine 142, and glutamine 145. L-aspartate contacts are provided by arginine 175 and arginine 229. Residues glycine 270 and proline 271 each contribute to the carbamoyl phosphate site.

It belongs to the aspartate/ornithine carbamoyltransferase superfamily. ATCase family. Heterododecamer (2C3:3R2) of six catalytic PyrB chains organized as two trimers (C3), and six regulatory PyrI chains organized as three dimers (R2).

It carries out the reaction carbamoyl phosphate + L-aspartate = N-carbamoyl-L-aspartate + phosphate + H(+). It functions in the pathway pyrimidine metabolism; UMP biosynthesis via de novo pathway; (S)-dihydroorotate from bicarbonate: step 2/3. Catalyzes the condensation of carbamoyl phosphate and aspartate to form carbamoyl aspartate and inorganic phosphate, the committed step in the de novo pyrimidine nucleotide biosynthesis pathway. This Bradyrhizobium diazoefficiens (strain JCM 10833 / BCRC 13528 / IAM 13628 / NBRC 14792 / USDA 110) protein is Aspartate carbamoyltransferase catalytic subunit.